Consider the following 321-residue polypeptide: uncharacterized protein (321 aa).

A disordered region spans residues 280–306; the sequence is NSDHINNENNTNSNNDDNSNNSNNNNE. Positions 286–306 are enriched in low complexity; sequence NENNTNSNNDDNSNNSNNNNE.

This is an uncharacterized protein from Dictyostelium discoideum (Social amoeba).